Reading from the N-terminus, the 333-residue chain is Dehydrodolichyl diphosphate synthase complex subunit Dhdds (333 aa).

(2E,6E)-farnesyl diphosphate contacts are provided by D34, G35, R37, R38, and R85. D34 lines the Mg(2+) pocket. R38, R85, R205, R211, and S213 together coordinate isopentenyl diphosphate.

It belongs to the UPP synthase family. As to quaternary structure, the active dehydrodolichyl diphosphate synthase complex is a heterotetramer composed of a dimer of heterodimer of DHDDS and NUS1. Interacts with NPC2. Mg(2+) is required as a cofactor.

The protein localises to the endoplasmic reticulum membrane. It catalyses the reaction n isopentenyl diphosphate + (2E,6E)-farnesyl diphosphate = a di-trans,poly-cis-polyprenyl diphosphate + n diphosphate. The protein operates within protein modification; protein glycosylation. It functions in the pathway lipid metabolism. With NUS1, forms the dehydrodolichyl diphosphate synthase (DDS) complex, an essential component of the dolichol monophosphate (Dol-P) biosynthetic machinery. Both subunits contribute to enzymatic activity, i.e. condensation of multiple copies of isopentenyl pyrophosphate (IPP) to farnesyl pyrophosphate (FPP) to produce dehydrodolichyl diphosphate (Dedol-PP), a precursor of dolichol phosphate which is utilized as a sugar carrier in protein glycosylation in the endoplasmic reticulum (ER). Synthesizes long-chain polyprenols, mostly of C95 and C100 chain length. Regulates the glycosylation and stability of nascent NPC2, thereby promoting trafficking of LDL-derived cholesterol. The protein is Dehydrodolichyl diphosphate synthase complex subunit Dhdds of Mus musculus (Mouse).